Reading from the N-terminus, the 1174-residue chain is Pecanex-like protein 4 (1174 aa).

Helical transmembrane passes span 40 to 60 (IYVN…TGTL), 72 to 92 (AAAL…LISV), 140 to 160 (TVFH…YLLP), 173 to 193 (TAVL…SLIV), 217 to 237 (LYIF…NIPA), 244 to 264 (ILHI…LPPP), 284 to 304 (SMST…AAVV), 307 to 327 (FIPS…LLSL), 366 to 386 (FLFI…HHYV), 394 to 414 (SGAQ…VWIL), 451 to 471 (IGAV…VAFL), 543 to 563 (LIQF…LWTE), 580 to 600 (VFAP…SPLL), and 643 to 663 (LTAA…LPGS). The span at 785-797 (PSTQENKTENTGE) shows a compositional bias: polar residues. Residues 785–875 (PSTQENKTEN…DDHSAGTGPK (91 aa)) are disordered. N-linked (GlcNAc...) asparagine glycosylation is present at Asn790. Low complexity predominate over residues 798 to 810 (ASPALPPAANSSP). Residues 835–846 (PAIKNRKEKLQS) show a composition bias toward basic and acidic residues. N-linked (GlcNAc...) asparagine glycosylation is found at Asn1122 and Asn1149.

Belongs to the pecanex family.

The protein resides in the membrane. The protein is Pecanex-like protein 4 of Mus musculus (Mouse).